Here is a 179-residue protein sequence, read N- to C-terminus: Putative manganese efflux pump MntP (179 aa).

6 helical membrane passes run 4–24 (VLIL…GLGI), 39–59 (LFFG…GIGL), 69–89 (IVAF…AFNE), 102–122 (ILLT…YSLH), 128–148 (IYLS…IGVY), and 159–179 (SKAE…ILLF).

Belongs to the MntP (TC 9.B.29) family.

It localises to the cell inner membrane. Probably functions as a manganese efflux pump. The protein is Putative manganese efflux pump MntP of Aliarcobacter butzleri (strain RM4018) (Arcobacter butzleri).